Here is a 148-residue protein sequence, read N- to C-terminus: Large ribosomal subunit protein bL9 (148 aa).

Belongs to the bacterial ribosomal protein bL9 family.

In terms of biological role, binds to the 23S rRNA. This is Large ribosomal subunit protein bL9 from Agathobacter rectalis (strain ATCC 33656 / DSM 3377 / JCM 17463 / KCTC 5835 / VPI 0990) (Eubacterium rectale).